The sequence spans 320 residues: Protoheme IX farnesyltransferase (320 aa).

The interval 1-24 (MSMITERPVSDPAGQSVSATGDGA) is disordered. Transmembrane regions (helical) follow at residues 33–55 (AVVAAYVALTKPRIVELLLVTTV), 68–88 (LWLMAVVLVGGSLAAGAASVL), 117–137 (NALIFGLVLATVSVTLLAVFT), 140–160 (LAAGLTLAAILYYDLVYTAWL), 183–203 (WAAVTGSLAPAAWALFGVVFF), 241–261 (ILVFAWLTVLVSLVTWPLGAG), 262–282 (MGPIYGLPTLVVGVIFLVEAH), and 300–320 (FHWSTTYLTVVFAAVALDALI).

The protein belongs to the UbiA prenyltransferase family. Protoheme IX farnesyltransferase subfamily.

Its subcellular location is the cell membrane. The enzyme catalyses heme b + (2E,6E)-farnesyl diphosphate + H2O = Fe(II)-heme o + diphosphate. It participates in porphyrin-containing compound metabolism; heme O biosynthesis; heme O from protoheme: step 1/1. Its function is as follows. Converts heme B (protoheme IX) to heme O by substitution of the vinyl group on carbon 2 of heme B porphyrin ring with a hydroxyethyl farnesyl side group. The protein is Protoheme IX farnesyltransferase of Salinispora tropica (strain ATCC BAA-916 / DSM 44818 / JCM 13857 / NBRC 105044 / CNB-440).